The sequence spans 209 residues: dITP/XTP pyrophosphatase (209 aa).

Thr7–Lys12 is a substrate binding site. Asp73 serves as the catalytic Proton acceptor. Position 73 (Asp73) interacts with Mg(2+). Residues Ser74, Phe155–Asp158, Lys178, and His183–Arg184 each bind substrate.

The protein belongs to the HAM1 NTPase family. Homodimer. The cofactor is Mg(2+).

It catalyses the reaction XTP + H2O = XMP + diphosphate + H(+). It carries out the reaction dITP + H2O = dIMP + diphosphate + H(+). The catalysed reaction is ITP + H2O = IMP + diphosphate + H(+). Functionally, pyrophosphatase that catalyzes the hydrolysis of nucleoside triphosphates to their monophosphate derivatives, with a high preference for the non-canonical purine nucleotides XTP (xanthosine triphosphate), dITP (deoxyinosine triphosphate) and ITP. Seems to function as a house-cleaning enzyme that removes non-canonical purine nucleotides from the nucleotide pool, thus preventing their incorporation into DNA/RNA and avoiding chromosomal lesions. In Sulfurovum sp. (strain NBC37-1), this protein is dITP/XTP pyrophosphatase.